The primary structure comprises 167 residues: Translationally-controlled tumor protein homolog (167 aa).

The 167-residue stretch at 1 to 167 (MLIYQDVLTG…WKDGLKEIKI (167 aa)) folds into the TCTP domain.

This sequence belongs to the TCTP family.

Its subcellular location is the cytoplasm. The protein localises to the cytoskeleton. Its function is as follows. Involved in protein synthesis. Involved in microtubule stabilization. This chain is Translationally-controlled tumor protein homolog, found in Cryptococcus neoformans var. neoformans serotype D (strain B-3501A) (Filobasidiella neoformans).